Here is a 146-residue protein sequence, read N- to C-terminus: Sperm surface protein Sp17 (146 aa).

The span at 76–88 shows a compositional bias: basic and acidic residues; the sequence is EHESEKCEAEEKS. The interval 76–109 is disordered; that stretch reads EHESEKCEAEEKSQSVTEEETPVLTIDSEDDKDK. Residues 92–108 show a composition bias toward acidic residues; it reads TEEETPVLTIDSEDDKD. Residues 110-139 enclose the IQ domain; the sequence is EEMAALKIQAAFRGHLAREDVKKIRTNKAE.

In terms of assembly, homodimer. May interact with ROPN1. Post-translationally, the N-terminus is blocked. In terms of tissue distribution, testis- and sperm-specific.

Its subcellular location is the membrane. In terms of biological role, sperm surface zona pellucida binding protein. Helps to bind spermatozoa to the zona pellucida with high affinity. Might function in binding zona pellucida and carbohydrates. The protein is Sperm surface protein Sp17 (SPA17) of Oryctolagus cuniculus (Rabbit).